Here is a 199-residue protein sequence, read N- to C-terminus: VAMP-like protein YKT61 (199 aa).

In terms of domain architecture, Longin spans 7 to 133 (LVLKCAPEAS…LTEALNKFQD (127 aa)). One can recognise a v-SNARE coiled-coil homology domain in the interval 139–199 (KLLKIQRELD…KKTNSCCTIL (61 aa)). Residue Cys-195 is the site of S-palmitoyl cysteine attachment. At Cys-196 the chain carries Cysteine methyl ester. The S-geranylgeranyl cysteine moiety is linked to residue Cys-196. Positions 197–199 (TIL) are cleaved as a propeptide — removed in mature form.

The protein belongs to the synaptobrevin family. As to quaternary structure, interacts with SYP41. Core constituent of the SNARE complex required for membrane fusion at the trans-Golgi network. In terms of tissue distribution, expressed ubiquitously in roots, stems, flowers and leaves.

Its subcellular location is the cell membrane. Functionally, may be involved in the secretory pathway. Essential for membrane fusion mediated by either SYP41 or SYP61; triggers the fusion of phospholipid vesicles containing SYP41 or SYP61 and VTI12. In Arabidopsis thaliana (Mouse-ear cress), this protein is VAMP-like protein YKT61.